We begin with the raw amino-acid sequence, 256 residues long: Phosphatidylglycerol--prolipoprotein diacylglyceryl transferase (256 aa).

The next 3 membrane-spanning stretches (helical) occupy residues 19 to 39 (VHWY…LGYW), 56 to 76 (LIFY…MLFY), and 91 to 111 (IWEG…AAWL). An a 1,2-diacyl-sn-glycero-3-phospho-(1'-sn-glycerol)-binding site is contributed by Arg139. A helical transmembrane segment spans residues 231 to 251 (FGWLTMGQVLSIPMLLIGIWL).

It belongs to the Lgt family.

It is found in the cell inner membrane. It catalyses the reaction L-cysteinyl-[prolipoprotein] + a 1,2-diacyl-sn-glycero-3-phospho-(1'-sn-glycerol) = an S-1,2-diacyl-sn-glyceryl-L-cysteinyl-[prolipoprotein] + sn-glycerol 1-phosphate + H(+). The protein operates within protein modification; lipoprotein biosynthesis (diacylglyceryl transfer). Catalyzes the transfer of the diacylglyceryl group from phosphatidylglycerol to the sulfhydryl group of the N-terminal cysteine of a prolipoprotein, the first step in the formation of mature lipoproteins. The sequence is that of Phosphatidylglycerol--prolipoprotein diacylglyceryl transferase from Legionella pneumophila (strain Corby).